The chain runs to 342 residues: MSIEKGKGRAMDIDLPLGSESTLPWVEKYRPANLEDVVSHKDIISTLEKFISSNRVPHMLFYGPPGTGKTSTILACARKIYGPNYRNQLMELNASDDRGIDAVREQIKNFASTRQIFASTFKMIILDEADAMTLAAQNALRRVIEKYTKNVRFCIICNYINKISPAIQSRCTRFRFQPLPPKEIEKTVDHVIQSEHCNIDPDAKMAVLRLSKGDMRKALNILQACHAAYDHIDVSAIYNCVGHPHPSDIDYFLKSIMNDEFVIAFNTISSIKQQKGLALQDILTCIFEALDELEIKPNAKIFILDQLATIEHRMSFGCSEKIQLSAMIASIKTGVDLAAKVN.

63-70 provides a ligand contact to ATP; that stretch reads GPPGTGKT.

This sequence belongs to the activator 1 small subunits family. Heteropentamer of subunits rfc1, rfc2, rfc3, rfc4 and rfc5 that forms a complex (RFC) with PCNA in the presence of ATP. Two other complexes exist where rfc1 can be replaced by either ctf18 or elg1 to form the ctf18-RFC or the elg1-RFC complexes respectively.

It localises to the nucleus. Its function is as follows. The elongation of primed DNA templates by DNA polymerase delta and epsilon requires the action of the accessory proteins PCNA and activator 1. Subunit 3 binds ATP. Also involved in replication and DNA damage checkpoint controls, probably functioning as a checkpoint sensor. In Schizosaccharomyces pombe (strain 972 / ATCC 24843) (Fission yeast), this protein is Replication factor C subunit 3 (rfc3).